Reading from the N-terminus, the 637-residue chain is Serine/threonine protein kinase ypkA (637 aa).

The span at 20–29 (TFTRSSSTST) shows a compositional bias: low complexity. 2 disordered regions span residues 20 to 63 (TFTR…SLVS) and 104 to 140 (SSSV…INAA). Over residues 40 to 61 (VVSQTPSISSTNSNGINASESL) the composition is skewed to polar residues. The span at 104–116 (SSSVRPSSSSSHS) shows a compositional bias: low complexity. Residues 117–136 (THGQTASFAQSGRPQSTSGG) show a composition bias toward polar residues. Positions 294–551 (FDLLKVVGKG…AAEIKSHHFF (258 aa)) constitute a Protein kinase domain. Residues 300–308 (VGKGSFGKV) and lysine 323 contribute to the ATP site. The Proton acceptor role is filled by aspartate 417. In terms of domain architecture, AGC-kinase C-terminal spans 552-623 (ANIDWRKLLQ…NRPVAGLGDA (72 aa)). Residues serine 593 and serine 612 each carry the phosphoserine modification. Residue tyrosine 613 is modified to Phosphotyrosine.

Belongs to the protein kinase superfamily. Ser/Thr protein kinase family. Interacts with the sakA MAP kinase.

The enzyme catalyses L-seryl-[protein] + ATP = O-phospho-L-seryl-[protein] + ADP + H(+). It carries out the reaction L-threonyl-[protein] + ATP = O-phospho-L-threonyl-[protein] + ADP + H(+). Serine/threonine protein kinase required for vegetative growth and conidiation. Important for fungal survival through the regulation of glycosphingolipid (GSL) biosynthesis and cross talks with MAP kinase pathways such as the cell wall integrity (CWI) and the high osmolarity glycerol (HOG) pathways. The chain is Serine/threonine protein kinase ypkA from Aspergillus fumigatus (strain ATCC MYA-4609 / CBS 101355 / FGSC A1100 / Af293) (Neosartorya fumigata).